The chain runs to 682 residues: MLLNGQISALSLDDNDNGQQHQDEVQAKHQDQGHTCPSRPSVPSLSRIYRCTPVPTIVLDASMVIIEVSNSHVALFGKPRDSLLHTSISDVSPECIPVPNIPILYGALRAACSTREIQVVEHVVVGEKIAHNLRVTPVYEDETLLFVVLEVENLRAEVINNQHAYMNETYKILVDTVKDYAIFMLDPTGHIATWNAGAGVLKGYKAEEIIGKHFSILYSPADRDNGKPARALDVCLREGRIEDEGWRYRRDGSRFWANVLITPIYQFGQHVGFVKVTRDLTERKEAEACMIAAFEESSRLKTDFLANISHEIRTPMNGMQIALTMLTDTGLSEEQREHANIVQDSMSLLLQIVNDVLDYSKLSSGSFSLHADMLDIREIVGAVVRNCRSSLQEGVELDTEISPKLPTRMRGDPLRYRQVLQNLVGNAVKFTEKGSIHVKITSSTDEEDSDSSVVRTEVTDTGIGVPDSAINTLFTPFSRFANSAARKYQGTGLGLSICKSLAELMDGSVGYSPNPNASGSVFWFTAKMGGRSVTPPSKSPSVSGSPVPTEVASEMRSIAPRKHVLLVEDNIVNHTVMLKLLHTIGFQRIDGAWNGAEAVRMVRQKPLSYDIILMDVSMPVLDGLAATEQIRDMGLTMPIIAITGNAMKGDAETYIAQGMDDCICKPVHRDQLLRVLWKWFGT.

The segment at 11–41 (SLDDNDNGQQHQDEVQAKHQDQGHTCPSRPS) is disordered. Over residues 21–32 (HQDEVQAKHQDQ) the composition is skewed to basic and acidic residues. PAS domains are found at residues 45-105 (LSRI…PILY) and 166-239 (MNET…LREG). In terms of domain architecture, PAC spans 241-292 (IEDEGWRYRRDGSRFWANVLITPIYQFGQHVGFVKVTRDLTERKEAEACMIA). A Histidine kinase domain is found at 307-530 (NISHEIRTPM…VFWFTAKMGG (224 aa)). Position 310 is a phosphohistidine; by autocatalysis (H310). The Response regulatory domain occupies 563-680 (HVLLVEDNIV…QLLRVLWKWF (118 aa)). D615 carries the post-translational modification 4-aspartylphosphate.

Activation probably requires a transfer of a phosphate group between a His in the histidine kinase domain and an Asp of the response regulatory domain.

Its subcellular location is the cytoplasm. The catalysed reaction is ATP + protein L-histidine = ADP + protein N-phospho-L-histidine.. Functionally, may be part of a two-component regulatory system required for formation of conidia on certain growth media. The protein is Two-component system protein A of Emericella nidulans (strain FGSC A4 / ATCC 38163 / CBS 112.46 / NRRL 194 / M139) (Aspergillus nidulans).